A 143-amino-acid chain; its full sequence is Large ribosomal subunit protein uL11 (143 aa).

This sequence belongs to the universal ribosomal protein uL11 family. As to quaternary structure, part of the ribosomal stalk of the 50S ribosomal subunit. Interacts with L10 and the large rRNA to form the base of the stalk. L10 forms an elongated spine to which L12 dimers bind in a sequential fashion forming a multimeric L10(L12)X complex. Post-translationally, one or more lysine residues are methylated.

Its function is as follows. Forms part of the ribosomal stalk which helps the ribosome interact with GTP-bound translation factors. This chain is Large ribosomal subunit protein uL11, found in Laribacter hongkongensis (strain HLHK9).